Consider the following 309-residue polypeptide: Malate dehydrogenase (309 aa).

Residues 8–13 (GAGLVG) and aspartate 33 contribute to the NAD(+) site. 2 residues coordinate substrate: arginine 82 and arginine 88. Residues asparagine 95 and 118–120 (VSN) contribute to the NAD(+) site. Asparagine 120 and arginine 151 together coordinate substrate. Histidine 175 functions as the Proton acceptor in the catalytic mechanism.

This sequence belongs to the LDH/MDH superfamily. MDH type 3 family.

It catalyses the reaction (S)-malate + NAD(+) = oxaloacetate + NADH + H(+). Catalyzes the reversible oxidation of malate to oxaloacetate. This is Malate dehydrogenase from Pseudomonas putida (strain ATCC 700007 / DSM 6899 / JCM 31910 / BCRC 17059 / LMG 24140 / F1).